The primary structure comprises 76 residues: Large ribosomal subunit protein bL31 (76 aa).

This sequence belongs to the bacterial ribosomal protein bL31 family. Type A subfamily. Part of the 50S ribosomal subunit.

Functionally, binds the 23S rRNA. The polypeptide is Large ribosomal subunit protein bL31 (Picosynechococcus sp. (strain ATCC 27264 / PCC 7002 / PR-6) (Agmenellum quadruplicatum)).